A 216-amino-acid polypeptide reads, in one-letter code: Octanoyltransferase (216 aa).

Residues 24–212 form the BPL/LPL catalytic domain; the sequence is KFRKECILFL…NLCSFLEPIN (189 aa). Residues 69–76, 140–142, and 153–155 contribute to the substrate site; these read RGGDFTAH, SIG, and GIA. Cysteine 171 serves as the catalytic Acyl-thioester intermediate.

The protein belongs to the LipB family.

It is found in the cytoplasm. It catalyses the reaction octanoyl-[ACP] + L-lysyl-[protein] = N(6)-octanoyl-L-lysyl-[protein] + holo-[ACP] + H(+). It participates in protein modification; protein lipoylation via endogenous pathway; protein N(6)-(lipoyl)lysine from octanoyl-[acyl-carrier-protein]: step 1/2. Catalyzes the transfer of endogenously produced octanoic acid from octanoyl-acyl-carrier-protein onto the lipoyl domains of lipoate-dependent enzymes. Lipoyl-ACP can also act as a substrate although octanoyl-ACP is likely to be the physiological substrate. This is Octanoyltransferase from Leptospira interrogans serogroup Icterohaemorrhagiae serovar copenhageni (strain Fiocruz L1-130).